Reading from the N-terminus, the 517-residue chain is Putative thymidine phosphorylase (517 aa).

It belongs to the thymidine/pyrimidine-nucleoside phosphorylase family. Type 2 subfamily.

The catalysed reaction is thymidine + phosphate = 2-deoxy-alpha-D-ribose 1-phosphate + thymine. The sequence is that of Putative thymidine phosphorylase from Legionella pneumophila (strain Corby).